A 426-amino-acid polypeptide reads, in one-letter code: MKHLTEMVRQHKAGKTNGIYAVCSAHPLVLEAAIRYASANQTPLLIEATSNQVDQFGGYTGMTPADFRGFVCQLADSLNFPQDALILGGDHLGPNRWQNLPAAQAMANADDLIKSYVAAGFKKIHLDCSMSCQDDPIPLTDDIVAERAARLAKVAEETCLEHFGEADLEYVIGTEVPVPGGAHETLSELAVTTPDAARATLEAHRHAFEKQGLNAIWPRIIALVVQPGVEFDHTNVIDYQPAKATALSQMVENYETLIFEAHSTDYQTPQSLRQLVIDHFAILKVGPALTFALREALFSLAAIEEELVPAKACSGLRQVLENVMLDRPEYWQSHYHGDGNARRLARGYSYSDRVRYYWPDSQIDDAFAHLVRNLADSPIPLPLISQYLPLQYVKVRSGELQPTPRELIINHIQDILAQYHTACEGQ.

This sequence belongs to the GatZ/KbaZ family. KbaZ subfamily. Forms a complex with KbaY.

The protein operates within carbohydrate metabolism; D-tagatose 6-phosphate degradation; D-glyceraldehyde 3-phosphate and glycerone phosphate from D-tagatose 6-phosphate: step 2/2. Component of the tagatose-1,6-bisphosphate aldolase KbaYZ that is required for full activity and stability of the Y subunit. Could have a chaperone-like function for the proper and stable folding of KbaY. When expressed alone, KbaZ does not show any aldolase activity. The sequence is that of D-tagatose-1,6-bisphosphate aldolase subunit KbaZ from Escherichia coli O127:H6 (strain E2348/69 / EPEC).